The following is a 302-amino-acid chain: Sulfate adenylyltransferase subunit 2 (302 aa).

This sequence belongs to the PAPS reductase family. CysD subfamily. As to quaternary structure, heterodimer composed of CysD, the smaller subunit, and CysN.

The enzyme catalyses sulfate + ATP + H(+) = adenosine 5'-phosphosulfate + diphosphate. It functions in the pathway sulfur metabolism; hydrogen sulfide biosynthesis; sulfite from sulfate: step 1/3. In terms of biological role, with CysN forms the ATP sulfurylase (ATPS) that catalyzes the adenylation of sulfate producing adenosine 5'-phosphosulfate (APS) and diphosphate, the first enzymatic step in sulfur assimilation pathway. APS synthesis involves the formation of a high-energy phosphoric-sulfuric acid anhydride bond driven by GTP hydrolysis by CysN coupled to ATP hydrolysis by CysD. The sequence is that of Sulfate adenylyltransferase subunit 2 from Bacteroides thetaiotaomicron (strain ATCC 29148 / DSM 2079 / JCM 5827 / CCUG 10774 / NCTC 10582 / VPI-5482 / E50).